The chain runs to 338 residues: Trans-enoyl reductase fsr4 (338 aa).

65-68 (KDWK) is an NADP(+) binding site. Substrate is bound at residue 147-153 (AAFTAAC). NADP(+) is bound by residues 182–185 (SSAV), 205–208 (AGRA), Tyr-227, and 277–278 (II).

The protein belongs to the zinc-containing alcohol dehydrogenase family.

In terms of biological role, trans-enoyl reductase; part of the gene cluster that mediates the biosynthesis of fusarubins, highly pigmented naphthoquinones responsible for the coloration of the fruiting bodies. The non-reducing polyketide synthase FSR1 is responsible for the condensation of seven acetyl-CoA units to yield a haptaketide. After rings A and B are formed by aldol-type cyclization, the PKS-derived product is released as 6-O-demethylfusarubinaldehyde. Then, two hydroxyl groups at C-5 and C-10 are incorporated by FSR3, and simultaneously hydroxyl groups at C-6 and C-8 are methylated by FSR2. The aldehyde is, on the one hand, reduced by FSR3 to 8-O-methylfusarubin alcohol, which equilibrates mainly with 8-O-methylfusarubin and only small amounts of 8-O-methylnectriafurone. On the other hand, the aldehyde can be oxidized to form 8-O-methylfusarubinic acid, a reaction driven by FSR3 equilibrating with 8-O-methylfusarubinlactone, finally resulting in 8-O-methylanhydrofusarubinlactol after a further reduction step and loss of water. 8-O-Methylfusarubinic acid can also undergo decarboxylation, resulting in 8-O-methyl-13-hydroxynorjavanicin after another hydroxylation step at C-13. Both steps are most likely also accomplished by FSR3. No enzymatic function has been determined so far for either FSR4 and FSR5. Their deletion does not alter the product spectrum, but the possibility that they catalyze specific enzymatic steps during perithecium development cannot be ruled out. FSR4 might possess a regulatory function in the biosynthesis of fusarubins. The sequence is that of Trans-enoyl reductase fsr4 from Gibberella fujikuroi (strain CBS 195.34 / IMI 58289 / NRRL A-6831) (Bakanae and foot rot disease fungus).